The following is an 826-amino-acid chain: Zinc phosphodiesterase ELAC protein 2 (826 aa).

The N-terminal 16 residues, 1–16 (MWALCSLLRSAAGRTM), are a transit peptide targeting the mitochondrion. Over residues 15–24 (TMSQGRTISQ) the composition is skewed to polar residues. Disordered stretches follow at residues 15–51 (TMSQGRTISQAPARRERPRKDPLRHLRTREKRGPSGC) and 189–231 (QRRG…VSQR). Positions 27–38 (ARRERPRKDPLR) are enriched in basic and acidic residues. S199, S208, S212, S229, S618, and S736 each carry phosphoserine. Residues 208–224 (SPERSSDSESNENEPHL) are compositionally biased toward basic and acidic residues. A disordered region spans residues 798 to 826 (ELAGGLEDGEPQQKRAHTEEPQAKKVRAQ). Basic and acidic residues predominate over residues 808–820 (PQQKRAHTEEPQA).

Belongs to the RNase Z family. In terms of assembly, homodimer. Interacts with PTCD1. The cofactor is Zn(2+).

Its subcellular location is the mitochondrion. It is found in the mitochondrion matrix. It localises to the mitochondrion nucleoid. The protein resides in the nucleus. The enzyme catalyses Endonucleolytic cleavage of RNA, removing extra 3' nucleotides from tRNA precursor, generating 3' termini of tRNAs. A 3'-hydroxy group is left at the tRNA terminus and a 5'-phosphoryl group is left at the trailer molecule.. Its function is as follows. Zinc phosphodiesterase, which displays mitochondrial tRNA 3'-processing endonuclease activity. Involved in tRNA maturation, by removing a 3'-trailer from precursor tRNA. Associates with mitochondrial DNA complexes at the nucleoids to initiate RNA processing and ribosome assembly. The polypeptide is Zinc phosphodiesterase ELAC protein 2 (ELAC2) (Gorilla gorilla gorilla (Western lowland gorilla)).